A 75-amino-acid polypeptide reads, in one-letter code: MKAEIHPDYHTIKVVMTDGTEYLTRSTWGKDGDTMNLDIDSKSHPAWTGGSQQILDRGGRVSRFQKKFSGFLKKG.

It belongs to the bacterial ribosomal protein bL31 family. Type A subfamily. Part of the 50S ribosomal subunit.

Functionally, binds the 23S rRNA. The polypeptide is Large ribosomal subunit protein bL31 (Nitrobacter winogradskyi (strain ATCC 25391 / DSM 10237 / CIP 104748 / NCIMB 11846 / Nb-255)).